A 261-amino-acid chain; its full sequence is WW domain-binding protein 2 (261 aa).

The region spanning 1 to 84 (MALNKNHSEG…YLMKDCEIKQ (84 aa)) is the GRAM domain. Phosphotyrosine; by YES and SRC is present on Tyr-192. The PPxY motif 1 motif lies at 196–200 (PPPPY). Residues 196-209 (PPPPYPGPMEPPVS) are compositionally biased toward pro residues. Residues 196–261 (PPPPYPGPME…YYPPEDKKTQ (66 aa)) form a disordered region. The segment covering 218–230 (AAEAKAAEAAASA) has biased composition (low complexity). A Phosphotyrosine; by YES and SRC modification is found at Tyr-231. Over residues 245-254 (SQPPPPPYYP) the composition is skewed to pro residues. The PPxY motif 2 signature appears at 248-252 (PPPPY).

As to quaternary structure, binds to the WW domain of YAP1, WWP1 and WWP2. Interacts with NEDD4. Interacts with ESR1 and UBE3A. Post-translationally, phosphorylated in repsonse to EGF as well as estrogen and progesterone hormones. Tyr-192 and Tyr-231 are phosphorylated by YES and SRC inducing nuclear translocation. In terms of tissue distribution, ubiquitous.

The protein resides in the cytoplasm. The protein localises to the nucleus. Its function is as follows. Acts as a transcriptional coactivator of estrogen and progesterone receptors (ESR1 and PGR) upon hormone activation. In presence of estrogen, binds to ESR1-responsive promoters. Synergizes with YAP1 to enhance PGR activity. Modulates expression of post-synaptic scaffolding proteins via regulation of ESR1, ESR2 and PGR. This is WW domain-binding protein 2 from Homo sapiens (Human).